The chain runs to 168 residues: Phosphopantetheine adenylyltransferase (168 aa).

T10 serves as a coordination point for substrate. ATP is bound by residues T10–F11 and H18. Positions 42, 74, and 88 each coordinate substrate. Residues G89–R91, E99, and N124–T130 contribute to the ATP site.

It belongs to the bacterial CoaD family. Homohexamer. Mg(2+) serves as cofactor.

The protein localises to the cytoplasm. The catalysed reaction is (R)-4'-phosphopantetheine + ATP + H(+) = 3'-dephospho-CoA + diphosphate. It participates in cofactor biosynthesis; coenzyme A biosynthesis; CoA from (R)-pantothenate: step 4/5. In terms of biological role, reversibly transfers an adenylyl group from ATP to 4'-phosphopantetheine, yielding dephospho-CoA (dPCoA) and pyrophosphate. The sequence is that of Phosphopantetheine adenylyltransferase from Shewanella denitrificans (strain OS217 / ATCC BAA-1090 / DSM 15013).